Here is a 334-residue protein sequence, read N- to C-terminus: Glycerol-3-phosphate dehydrogenase [NAD(P)+] 2 (334 aa).

NADPH contacts are provided by tryptophan 16, arginine 36, arginine 37, and lysine 110. Residues lysine 110 and glycine 140 each coordinate sn-glycerol 3-phosphate. Alanine 144 contributes to the NADPH binding site. The sn-glycerol 3-phosphate site is built by lysine 195, aspartate 248, serine 258, arginine 259, and asparagine 260. Catalysis depends on lysine 195, which acts as the Proton acceptor. Arginine 259 contributes to the NADPH binding site. Residues valine 282 and glutamate 284 each coordinate NADPH.

This sequence belongs to the NAD-dependent glycerol-3-phosphate dehydrogenase family.

The protein localises to the cytoplasm. The catalysed reaction is sn-glycerol 3-phosphate + NAD(+) = dihydroxyacetone phosphate + NADH + H(+). The enzyme catalyses sn-glycerol 3-phosphate + NADP(+) = dihydroxyacetone phosphate + NADPH + H(+). It functions in the pathway membrane lipid metabolism; glycerophospholipid metabolism. Its function is as follows. Catalyzes the reduction of the glycolytic intermediate dihydroxyacetone phosphate (DHAP) to sn-glycerol 3-phosphate (G3P), the key precursor for phospholipid synthesis. The sequence is that of Glycerol-3-phosphate dehydrogenase [NAD(P)+] 2 from Mycobacterium bovis (strain ATCC BAA-935 / AF2122/97).